The sequence spans 920 residues: Translation initiation factor IF-2 (920 aa).

Composition is skewed to basic and acidic residues over residues 149 to 175 (EAEM…EKPV), 186 to 197 (AEKKATADKAAK), and 255 to 265 (AKPEGADDKKK). Disordered stretches follow at residues 149-197 (EAEM…KAAK) and 245-319 (EAKK…KQRQ). Residues 301–311 (SSGGVGGWRSG) show a composition bias toward gly residues. The 168-residue stretch at 418–585 (PRPPVVTVMG…NVLLQAEILE (168 aa)) folds into the tr-type G domain. Positions 427 to 434 (GHVDHGKT) are G1. 427-434 (GHVDHGKT) provides a ligand contact to GTP. The G2 stretch occupies residues 452 to 456 (GITQH). The G3 stretch occupies residues 473-476 (DTPG). GTP-binding positions include 473 to 477 (DTPGH) and 527 to 530 (NKID). Positions 527–530 (NKID) are G4. The G5 stretch occupies residues 563–565 (SAK).

This sequence belongs to the TRAFAC class translation factor GTPase superfamily. Classic translation factor GTPase family. IF-2 subfamily.

Its subcellular location is the cytoplasm. One of the essential components for the initiation of protein synthesis. Protects formylmethionyl-tRNA from spontaneous hydrolysis and promotes its binding to the 30S ribosomal subunits. Also involved in the hydrolysis of GTP during the formation of the 70S ribosomal complex. In Polynucleobacter asymbioticus (strain DSM 18221 / CIP 109841 / QLW-P1DMWA-1) (Polynucleobacter necessarius subsp. asymbioticus), this protein is Translation initiation factor IF-2.